A 72-amino-acid chain; its full sequence is Translation initiation factor IF-1 (72 aa).

The 72-residue stretch at 1-72 (MAKDDVIEID…DKGRITFRYK (72 aa)) folds into the S1-like domain.

Belongs to the IF-1 family. As to quaternary structure, component of the 30S ribosomal translation pre-initiation complex which assembles on the 30S ribosome in the order IF-2 and IF-3, IF-1 and N-formylmethionyl-tRNA(fMet); mRNA recruitment can occur at any time during PIC assembly.

It is found in the cytoplasm. Its function is as follows. One of the essential components for the initiation of protein synthesis. Stabilizes the binding of IF-2 and IF-3 on the 30S subunit to which N-formylmethionyl-tRNA(fMet) subsequently binds. Helps modulate mRNA selection, yielding the 30S pre-initiation complex (PIC). Upon addition of the 50S ribosomal subunit IF-1, IF-2 and IF-3 are released leaving the mature 70S translation initiation complex. The chain is Translation initiation factor IF-1 from Campylobacter jejuni subsp. doylei (strain ATCC BAA-1458 / RM4099 / 269.97).